A 367-amino-acid polypeptide reads, in one-letter code: MKKQRIVVKIGSSSLADSHEGISKEQLSDHVAALARLKEEGHEVLLITSGAVAAGFSALGYPSRPVTIKGKQAAAAVGQSLLMQAYTEEFRKYGIVTAQLLLTRSDFSRKEQYSNAYATLGELLNRSALPIINENDSISLEELTFGDNDMLSALVSGLVSADMLMIFTDVNGLYDKNPQKNEDAKKYYFLPEVTEEIASLAGDAGSKLGTGGMKSKVDAAKTALSLGVSVFIGTGRGQEKFVDVLKGKGDGTYVGNAPQKEMKINKQWIALHSVVSGQIEIDAGAATAIIQHGKSLLPAGVTNVSGFFQVGEVVEVMTQQGRVIGKGQCTYSAEELRDVKGMQSQQIQARGERHNYEVIHRDYWVSF.

Lys-9 provides a ligand contact to ATP. 3 residues coordinate substrate: Ser-49, Asp-136, and Asn-148. ATP is bound by residues 168 to 169 (TD) and 210 to 216 (TGGMKSK). The region spanning 276 to 350 (SGQIEIDAGA…GMQSQQIQAR (75 aa)) is the PUA domain.

It belongs to the glutamate 5-kinase family.

The protein localises to the cytoplasm. It catalyses the reaction L-glutamate + ATP = L-glutamyl 5-phosphate + ADP. It functions in the pathway amino-acid biosynthesis; L-proline biosynthesis; L-glutamate 5-semialdehyde from L-glutamate: step 1/2. Its function is as follows. Catalyzes the transfer of a phosphate group to glutamate to form L-glutamate 5-phosphate. The chain is Glutamate 5-kinase from Bacillus anthracis.